The sequence spans 367 residues: CCCH-type zinc finger protein moe-3 (367 aa).

A compositionally biased stretch (basic and acidic residues) spans 1–15; that stretch reads MSKVKGDLEKSDKRP. The segment at 1 to 57 is disordered; it reads MSKVKGDLEKSDKRPPSSMSTGSADSGVFSSGVHASSPSHSQGSSSQSGPPSPTTQL. Residues 30–49 show a composition bias toward low complexity; the sequence is SSGVHASSPSHSQGSSSQSG. The stretch at 63–92 forms a coiled coil; the sequence is ETANLIAVNEQLRKEIAENKQIQTNQMRAL. The tract at residues 107–126 is disordered; that stretch reads SISPHHGFPQRPPRGERRMQ. 2 consecutive C3H1-type zinc fingers follow at residues 130 to 158 and 172 to 200; these read SYKT…HGEE and KYKT…HPDN. The disordered stretch occupies residues 235 to 268; that stretch reads NTRNSYNQQPPPMGGLEMQSSPMKSSSDSSHMRS. Residues 252–268 are compositionally biased toward low complexity; that stretch reads MQSSPMKSSSDSSHMRS.

Exclusively expressed in the hermaphrodite gonad. Weakly distributed throughout gonadal oocytes from the mitotic stage to the developing diakinesis stage, with expression restricted to the distal region of the gonad.

In terms of biological role, zinc-finger protein that may play a role in oocyte maturation and fertility. This is CCCH-type zinc finger protein moe-3 from Caenorhabditis elegans.